Consider the following 172-residue polypeptide: Shikimate kinase (172 aa).

14-19 (GAGKST) is a binding site for ATP. Mg(2+) is bound at residue serine 18. Residues aspartate 36, arginine 60, and glycine 82 each contribute to the substrate site. An ATP-binding site is contributed by arginine 120. Arginine 140 contacts substrate. Glutamine 157 lines the ATP pocket.

This sequence belongs to the shikimate kinase family. As to quaternary structure, monomer. Requires Mg(2+) as cofactor.

The protein resides in the cytoplasm. It carries out the reaction shikimate + ATP = 3-phosphoshikimate + ADP + H(+). It participates in metabolic intermediate biosynthesis; chorismate biosynthesis; chorismate from D-erythrose 4-phosphate and phosphoenolpyruvate: step 5/7. Its function is as follows. Catalyzes the specific phosphorylation of the 3-hydroxyl group of shikimic acid using ATP as a cosubstrate. This is Shikimate kinase from Aeromonas salmonicida (strain A449).